A 542-amino-acid polypeptide reads, in one-letter code: GMP synthase [glutamine-hydrolyzing] (542 aa).

Residues 28 to 218 form the Glutamine amidotransferase type-1 domain; sequence MLVILDFGSQ…VYHICQCEPT (191 aa). The active-site Nucleophile is the C105. Catalysis depends on residues H192 and E194. Positions 219 to 417 constitute a GMPS ATP-PPase domain; sequence WTTEAFVEES…IGLPEEIVRR (199 aa). Residue 246-252 participates in ATP binding; sequence SGGVDSS.

Homodimer.

The catalysed reaction is XMP + L-glutamine + ATP + H2O = GMP + L-glutamate + AMP + diphosphate + 2 H(+). Its pathway is purine metabolism; GMP biosynthesis; GMP from XMP (L-Gln route): step 1/1. Functionally, catalyzes the synthesis of GMP from XMP. The sequence is that of GMP synthase [glutamine-hydrolyzing] from Rippkaea orientalis (strain PCC 8801 / RF-1) (Cyanothece sp. (strain PCC 8801)).